A 250-amino-acid chain; its full sequence is Peptidyl-tRNA hydrolase, mitochondrial (250 aa).

A mitochondrion-targeting transit peptide spans 1-45 (MRLLSGASASRIPCPLLSLARARARCLPVPASATACRAASSSAAA). Y68 contributes to the tRNA binding site. H73 serves as the catalytic Proton acceptor. TRNA-binding residues include F118, N120, and N166.

This sequence belongs to the PTH family.

The protein localises to the mitochondrion. It catalyses the reaction an N-acyl-L-alpha-aminoacyl-tRNA + H2O = an N-acyl-L-amino acid + a tRNA + H(+). Its function is as follows. The natural substrate for this enzyme may be peptidyl-tRNAs which drop off the ribosome during protein synthesis. The sequence is that of Peptidyl-tRNA hydrolase, mitochondrial from Oryza sativa subsp. japonica (Rice).